Reading from the N-terminus, the 304-residue chain is Protoheme IX farnesyltransferase (304 aa).

The next 9 helical transmembrane spans lie at 31-51, 58-78, 99-119, 126-146, 154-174, 180-200, 222-242, 243-263, and 284-304; these read VNTL…PDGL, VAAT…NCLI, LAPA…LTVL, LTMW…TVLL, IVIG…AVTG, ALLL…ALAL, FTRL…LLPF, ATRM…IGFL, and FSIL…YLPL.

It belongs to the UbiA prenyltransferase family. Protoheme IX farnesyltransferase subfamily.

It localises to the cell inner membrane. The catalysed reaction is heme b + (2E,6E)-farnesyl diphosphate + H2O = Fe(II)-heme o + diphosphate. Its pathway is porphyrin-containing compound metabolism; heme O biosynthesis; heme O from protoheme: step 1/1. Its function is as follows. Converts heme B (protoheme IX) to heme O by substitution of the vinyl group on carbon 2 of heme B porphyrin ring with a hydroxyethyl farnesyl side group. The polypeptide is Protoheme IX farnesyltransferase (Aromatoleum aromaticum (strain DSM 19018 / LMG 30748 / EbN1) (Azoarcus sp. (strain EbN1))).